Consider the following 623-residue polypeptide: V-type proton ATPase catalytic subunit A (623 aa).

Gly-252 to Thr-259 is an ATP binding site.

Belongs to the ATPase alpha/beta chains family. V-ATPase is a heteromultimeric enzyme composed of a peripheral catalytic V1 complex (main components: subunits A, B, C, D, E, and F) attached to an integral membrane V0 proton pore complex (main component: the proteolipid protein).

It catalyses the reaction ATP + H2O + 4 H(+)(in) = ADP + phosphate + 5 H(+)(out). Catalytic subunit of the peripheral V1 complex of vacuolar ATPase. V-ATPase vacuolar ATPase is responsible for acidifying a variety of intracellular compartments in eukaryotic cells. In Gossypium hirsutum (Upland cotton), this protein is V-type proton ATPase catalytic subunit A (CVA69.24).